A 240-amino-acid polypeptide reads, in one-letter code: 1-(5-phosphoribosyl)-5-[(5-phosphoribosylamino)methylideneamino] imidazole-4-carboxamide isomerase (240 aa).

The active-site Proton acceptor is Asp-8. The active-site Proton donor is Asp-129.

Belongs to the HisA/HisF family.

Its subcellular location is the cytoplasm. It carries out the reaction 1-(5-phospho-beta-D-ribosyl)-5-[(5-phospho-beta-D-ribosylamino)methylideneamino]imidazole-4-carboxamide = 5-[(5-phospho-1-deoxy-D-ribulos-1-ylimino)methylamino]-1-(5-phospho-beta-D-ribosyl)imidazole-4-carboxamide. The protein operates within amino-acid biosynthesis; L-histidine biosynthesis; L-histidine from 5-phospho-alpha-D-ribose 1-diphosphate: step 4/9. The polypeptide is 1-(5-phosphoribosyl)-5-[(5-phosphoribosylamino)methylideneamino] imidazole-4-carboxamide isomerase (Caldanaerobacter subterraneus subsp. tengcongensis (strain DSM 15242 / JCM 11007 / NBRC 100824 / MB4) (Thermoanaerobacter tengcongensis)).